The chain runs to 1138 residues: Nuclear pore complex-interacting protein family member B13 (1138 aa).

A helical membrane pass occupies residues 73–93 (VVITLWIVYLWVSLLKTIFWS). Disordered stretches follow at residues 242-578 (RMGH…NIKT) and 747-1138 (ERLR…RRLS). Over residues 252 to 263 (QQHSITDNSLSL) the composition is skewed to polar residues. The segment covering 349–359 (PLPPSAPPSAP) has biased composition (pro residues). Basic and acidic residues-rich tracts occupy residues 406–416 (DNIKTPAERLR), 448–458 (DNIKTPAERLR), 490–500 (DNIKTPAERLR), 532–542 (DNIKTPAERLR), 782–792 (DNIKTPAERLR), 824–834 (DNIKTPAERLR), 866–876 (DNIKTPAERLR), 908–918 (DNIKTPAERLR), 950–960 (DNIKTPAERLR), and 992–1002 (DNIKTPAERLR).

Belongs to the NPIP family.

The protein resides in the membrane. This chain is Nuclear pore complex-interacting protein family member B13, found in Homo sapiens (Human).